Consider the following 96-residue polypeptide: Ribonuclease P protein component 1 (96 aa).

Belongs to the eukaryotic/archaeal RNase P protein component 1 family. In terms of assembly, consists of a catalytic RNA component and at least 4-5 protein subunits.

It localises to the cytoplasm. The catalysed reaction is Endonucleolytic cleavage of RNA, removing 5'-extranucleotides from tRNA precursor.. Functionally, part of ribonuclease P, a protein complex that generates mature tRNA molecules by cleaving their 5'-ends. The protein is Ribonuclease P protein component 1 of Methanococcus aeolicus (strain ATCC BAA-1280 / DSM 17508 / OCM 812 / Nankai-3).